Consider the following 243-residue polypeptide: Zinc import ATP-binding protein ZnuC 2 (243 aa).

The ABC transporter domain maps to 3-218; that stretch reads LSLHQLSVKF…PEYKVLFGLD (216 aa). 35–42 contributes to the ATP binding site; sequence GPNGSGKS.

This sequence belongs to the ABC transporter superfamily. Zinc importer (TC 3.A.1.15.5) family. In terms of assembly, the complex is composed of two ATP-binding proteins (ZnuC), two transmembrane proteins (ZnuB) and a solute-binding protein (ZnuA).

The protein resides in the cell inner membrane. It catalyses the reaction Zn(2+)(out) + ATP(in) + H2O(in) = Zn(2+)(in) + ADP(in) + phosphate(in) + H(+)(in). In terms of biological role, part of the ABC transporter complex ZnuABC involved in zinc import. Responsible for energy coupling to the transport system. This chain is Zinc import ATP-binding protein ZnuC 2, found in Aliivibrio fischeri (strain ATCC 700601 / ES114) (Vibrio fischeri).